The following is a 277-amino-acid chain: Serine protease 33 (277 aa).

An N-terminal signal peptide occupies residues 1–24; that stretch reads MRGASHLQILLLLVLGTRMQECAA. Residues 34–276 enclose the Peptidase S1 domain; that stretch reads IVGGRDAQDG…YSPWIQARLS (243 aa). Cysteines 59 and 75 form a disulfide. Catalysis depends on charge relay system residues H74 and D123. Cystine bridges form between C157–C234, C190–C213, and C224–C252. S228 functions as the Charge relay system in the catalytic mechanism.

Belongs to the peptidase S1 family. In terms of processing, not glycosylated. As to expression, widely expressed.

The protein resides in the secreted. Its function is as follows. Serine protease that has amidolytic activity, cleaving its substrates before Arg residues. The sequence is that of Serine protease 33 (Prss33) from Mus musculus (Mouse).